A 372-amino-acid polypeptide reads, in one-letter code: MLVAVVKELKQGEGRVACTPENVRKLTAAGHKVIVEKNAGIGSGFSNDMYEKEGAKIVTHEQAWEADLVIKVKEPHESEYQYFKKNQIIWGFLHLASSKEIVEKMQGVGVIAISGETIIKNGKAELLAPMSAIAGQRSAIMGAYYSEAQHGGQGTLVTGVHENVDIPGSTYVIFGGGVAATNAANVALGLNAKVIIIELNDDRIKYLEDMYAEKDVTVVKSTPENLAEQIKKADVFISTILIPGAKPPKLVTREMVKSMKKGSVLIDIAIDQGGTIETIRPTTISDPVYEEEGVIHYGVPNQPGAVPRTSTMALAQGNIDYILEICDKGLEQAIKDNEALSAGVNIYQGQETNQGLATSHDLDYKEILNVIE.

Histidine 94 is a catalytic residue. 170–200 (TYVIFGGGVAATNAANVALGLNAKVIIIELN) provides a ligand contact to NAD(+).

The protein belongs to the AlaDH/PNT family.

It carries out the reaction L-alanine + NAD(+) + H2O = pyruvate + NH4(+) + NADH + H(+). It functions in the pathway amino-acid degradation; L-alanine degradation via dehydrogenase pathway; NH(3) and pyruvate from L-alanine: step 1/1. May play a role in cell wall synthesis as L-alanine is an important constituent of the peptidoglycan layer. This Staphylococcus aureus (strain bovine RF122 / ET3-1) protein is Alanine dehydrogenase 1 (ald1).